Consider the following 267-residue polypeptide: Aliphatic sulfonates import ATP-binding protein SsuB 1 (267 aa).

The 215-residue stretch at 35–249 (VRVRGLRRVF…RRADPAFDRL (215 aa)) folds into the ABC transporter domain. 67 to 74 (GRSGSGKS) contributes to the ATP binding site.

Belongs to the ABC transporter superfamily. Aliphatic sulfonates importer (TC 3.A.1.17.2) family. The complex is composed of two ATP-binding proteins (SsuB), two transmembrane proteins (SsuC) and a solute-binding protein (SsuA).

Its subcellular location is the cell membrane. The catalysed reaction is ATP + H2O + aliphatic sulfonate-[sulfonate-binding protein]Side 1 = ADP + phosphate + aliphatic sulfonateSide 2 + [sulfonate-binding protein]Side 1.. Its function is as follows. Part of the ABC transporter complex SsuABC involved in aliphatic sulfonates import. Responsible for energy coupling to the transport system. The sequence is that of Aliphatic sulfonates import ATP-binding protein SsuB 1 from Frankia alni (strain DSM 45986 / CECT 9034 / ACN14a).